A 463-amino-acid polypeptide reads, in one-letter code: ATP synthase subunit beta (463 aa).

151-158 (GGAGVGKT) contacts ATP.

The protein belongs to the ATPase alpha/beta chains family. In terms of assembly, F-type ATPases have 2 components, CF(1) - the catalytic core - and CF(0) - the membrane proton channel. CF(1) has five subunits: alpha(3), beta(3), gamma(1), delta(1), epsilon(1). CF(0) has three main subunits: a(1), b(2) and c(9-12). The alpha and beta chains form an alternating ring which encloses part of the gamma chain. CF(1) is attached to CF(0) by a central stalk formed by the gamma and epsilon chains, while a peripheral stalk is formed by the delta and b chains.

Its subcellular location is the cell membrane. The catalysed reaction is ATP + H2O + 4 H(+)(in) = ADP + phosphate + 5 H(+)(out). Produces ATP from ADP in the presence of a proton gradient across the membrane. The catalytic sites are hosted primarily by the beta subunits. This chain is ATP synthase subunit beta, found in Clostridium botulinum (strain ATCC 19397 / Type A).